A 270-amino-acid chain; its full sequence is MAPKVFYISDGTAITAEVFGHAVLSQFPLEFESLTIPFVETLAKAENVKRQINDCFITTGERPLVFHSIVKPEIRDIIYSSEGLDYDFLNTFVAPLEQHLGVSASPVLHRTHGKANHGYEARIDAINFAMDNDDGQTMKHMDQADLILLGVSRCGKTPSSLYLSMQFGIKAANYPFTEDDMDNLKLPEALKRNKKKLFGLTIDPVRLHEIRQSRMENSRYSSLKQCRLEVKEVEMMFKRERIPYIDTTNHSVEEIATKILDVTGLERHMF.

150–157 (GVSRCGKT) serves as a coordination point for ADP.

It belongs to the pyruvate, phosphate/water dikinase regulatory protein family. PSRP subfamily.

It carries out the reaction [pyruvate, water dikinase] + ADP = [pyruvate, water dikinase]-phosphate + AMP + H(+). The catalysed reaction is [pyruvate, water dikinase]-phosphate + phosphate + H(+) = [pyruvate, water dikinase] + diphosphate. Bifunctional serine/threonine kinase and phosphorylase involved in the regulation of the phosphoenolpyruvate synthase (PEPS) by catalyzing its phosphorylation/dephosphorylation. The sequence is that of Putative phosphoenolpyruvate synthase regulatory protein from Shewanella sp. (strain ANA-3).